The following is a 170-amino-acid chain: MDVTIQQPWFKRALGPFYPSRLFDQFFGEGLFESDLLPFLSSTISPYYRQSLFRTALDSGISEVRSDRDKFVIFLDVKHFSPEDLTVKVLGDFVEIHGKHNERQDDHGYISREFHRRYRLPTAVDQSALSCSLSADGMLTFSGPKIVDPSHSERPIPVSREEKPSSAPSS.

An N-acetylmethionine modification is found at Met-1. The interval 1–63 (MDVTIQQPWF…RTALDSGISE (63 aa)) is required for complex formation with BFSP1 and BFSP2. Gln-6 carries the deamidated glutamine; partial modification. Position 45 is a phosphoserine (Ser-45). Gln-50 bears the Deamidated glutamine; partial mark. Positions 52 to 161 (LFRTALDSGI…SERPIPVSRE (110 aa)) constitute a sHSP domain. N6-acetyllysine is present on residues Lys-70 and Lys-99. A Zn(2+)-binding site is contributed by His-100. Asn-101 carries the deamidated asparagine; partial modification. Zn(2+) contacts are provided by Glu-102, His-107, and His-151. Residues 144 to 170 (PKIVDPSHSERPIPVSREEKPSSAPSS) are disordered. The segment covering 148–164 (DPSHSERPIPVSREEKP) has biased composition (basic and acidic residues). A glycan (O-linked (GlcNAc) serine) is linked at Ser-159.

Belongs to the small heat shock protein (HSP20) family. Heteromer composed of three CRYAA and one CRYAB subunits. Inter-subunit bridging via zinc ions enhances stability, which is crucial as there is no protein turn over in the lens. Can also form homodimers and homotetramers (dimers of dimers) which serve as the building blocks of homooligomers. Within homooligomers, the zinc-binding motif is created from residues of 3 different molecules. His-100 and Glu-102 from one molecule are ligands of the zinc ion, and His-107 and His-151 residues from additional molecules complete the site with tetrahedral coordination geometry. Part of a complex required for lens intermediate filament formation composed of BFSP1, BFSP2 and CRYAA. Post-translationally, acetylation at Lys-70 may increase chaperone activity. In terms of processing, undergoes age-dependent proteolytical cleavage at the C-terminus.

The protein localises to the cytoplasm. It localises to the nucleus. Contributes to the transparency and refractive index of the lens. Acts as a chaperone, preventing aggregation of various proteins under a wide range of stress conditions. Required for the correct formation of lens intermediate filaments as part of a complex composed of BFSP1, BFSP2 and CRYAA. The sequence is that of Alpha-crystallin A chain (CRYAA) from Bradypus variegatus (Brown-throated three-fingered sloth).